Reading from the N-terminus, the 305-residue chain is Heat stress transcription factor B-4d (305 aa).

Residues 201–230 (LRRRNSLLLSELAHMRKLYNDIIYFLQNHV) are hydrophobic repeat HR-A/B. Residues 286–289 (KKRR) carry the Nuclear localization signal motif. A disordered region spans residues 286–305 (KKRRVQLVQEDEGDEQGSEG). Positions 294 to 305 (QEDEGDEQGSEG) are enriched in acidic residues.

Belongs to the HSF family. Class B subfamily. Homotrimer. Exhibits temperature-dependent phosphorylation.

The protein resides in the nucleus. Transcriptional regulator that specifically binds DNA of heat shock promoter elements (HSE). This Oryza sativa subsp. japonica (Rice) protein is Heat stress transcription factor B-4d (HSFB4D).